The following is a 227-amino-acid chain: PKHD-type hydroxylase Bxeno_B2756 (227 aa).

The Fe2OG dioxygenase domain occupies 80–179 (QVYPPLFNRY…RVASFFWVQS (100 aa)). Fe cation contacts are provided by His-98, Asp-100, and His-160. Residue Arg-170 participates in 2-oxoglutarate binding.

The cofactor is Fe(2+). It depends on L-ascorbate as a cofactor.

The sequence is that of PKHD-type hydroxylase Bxeno_B2756 from Paraburkholderia xenovorans (strain LB400).